Here is a 412-residue protein sequence, read N- to C-terminus: 2,3-bisphosphoglycerate-independent phosphoglycerate mutase (412 aa).

This sequence belongs to the BPG-independent phosphoglycerate mutase family. A-PGAM subfamily.

The catalysed reaction is (2R)-2-phosphoglycerate = (2R)-3-phosphoglycerate. Its pathway is carbohydrate degradation; glycolysis; pyruvate from D-glyceraldehyde 3-phosphate: step 3/5. Functionally, catalyzes the interconversion of 2-phosphoglycerate and 3-phosphoglycerate. The chain is 2,3-bisphosphoglycerate-independent phosphoglycerate mutase from Methanobrevibacter smithii (strain ATCC 35061 / DSM 861 / OCM 144 / PS).